The sequence spans 93 residues: U12-lycotoxin-Ls1a (93 aa).

The first 18 residues, 1 to 18, serve as a signal peptide directing secretion; the sequence is MKFAVILLFSLVVLAVAS. Residues 19-38 constitute a propeptide that is removed on maturation; that stretch reads ESVEEVRREIDIEDLPEQQR.

The protein belongs to the neurotoxin 31 family. Contains 5 disulfide bonds. In terms of tissue distribution, expressed by the venom gland.

The protein localises to the secreted. The chain is U12-lycotoxin-Ls1a from Lycosa singoriensis (Wolf spider).